A 366-amino-acid polypeptide reads, in one-letter code: RNA 3'-terminal phosphate cyclase (366 aa).

ATP contacts are provided by Gln104, Pro131, Tyr294, Asp297, Gln298, and His320. His320 functions as the Tele-AMP-histidine intermediate in the catalytic mechanism.

Belongs to the RNA 3'-terminal cyclase family. Type 1 subfamily.

Its subcellular location is the nucleus. The protein localises to the nucleoplasm. It carries out the reaction a 3'-end 3'-phospho-ribonucleotide-RNA + ATP = a 3'-end 2',3'-cyclophospho-ribonucleotide-RNA + AMP + diphosphate. Functionally, catalyzes the conversion of 3'-phosphate to a 2',3'-cyclic phosphodiester at the end of RNA. The mechanism of action of the enzyme occurs in 3 steps: (A) adenylation of the enzyme by ATP; (B) transfer of adenylate to an RNA-N3'P to produce RNA-N3'PP5'A; (C) and attack of the adjacent 2'-hydroxyl on the 3'-phosphorus in the diester linkage to produce the cyclic end product. Likely functions in some aspects of cellular RNA processing. Function plays an important role in regulating axon regeneration by inhibiting central nervous system (CNS) axon regeneration following optic nerve injury. The protein is RNA 3'-terminal phosphate cyclase (RTCA) of Macaca fascicularis (Crab-eating macaque).